Here is a 122-residue protein sequence, read N- to C-terminus: Replication termination protein (122 aa).

As to quaternary structure, homodimer.

In terms of biological role, plays a role in DNA replication and termination (fork arrest mechanism). Two dimers of rtp bind to the two inverted repeat regions (IRI and IRII) present in the termination site. The binding of each dimer is centered on an 8 bp direct repeat. The protein is Replication termination protein (rtp) of Bacillus spizizenii (strain ATCC 23059 / NRRL B-14472 / W23) (Bacillus subtilis subsp. spizizenii).